Here is a 102-residue protein sequence, read N- to C-terminus: Large ribosomal subunit protein bL21 (102 aa).

The protein belongs to the bacterial ribosomal protein bL21 family. In terms of assembly, part of the 50S ribosomal subunit. Contacts protein L20.

Its function is as follows. This protein binds to 23S rRNA in the presence of protein L20. The protein is Large ribosomal subunit protein bL21 of Myxococcus xanthus (strain DK1622).